The chain runs to 426 residues: L-ascorbate peroxidase T, chloroplastic (426 aa).

His112 serves as the catalytic Proton acceptor. His241 serves as a coordination point for heme b. Thr242 is a binding site for K(+). Positions Arg245–Gly269 are disordered. The segment covering Ala246–Tyr260 has biased composition (basic and acidic residues). Positions 274 and 281 each coordinate K(+). The helical transmembrane segment at Tyr397–Gly417 threads the bilayer.

The protein belongs to the peroxidase family. Ascorbate peroxidase subfamily. Requires heme b as cofactor.

The protein localises to the plastid. It localises to the chloroplast thylakoid membrane. The enzyme catalyses L-ascorbate + H2O2 = L-dehydroascorbate + 2 H2O. Functionally, plays a key role in hydrogen peroxide removal. The sequence is that of L-ascorbate peroxidase T, chloroplastic (APXT) from Arabidopsis thaliana (Mouse-ear cress).